The chain runs to 132 residues: uncharacterized protein (132 aa).

One can recognise an HTH merR-type domain in the interval 1–69; that stretch reads MNIGEAAKKS…LDEVGKLLTL (69 aa). The segment at residues 4 to 23 is a DNA-binding region (H-T-H motif); sequence GEAAKKSGLTPKMIRYYESI.

It is found in the cytoplasm. This is an uncharacterized protein from Pseudomonas aeruginosa (strain ATCC 15692 / DSM 22644 / CIP 104116 / JCM 14847 / LMG 12228 / 1C / PRS 101 / PAO1).